Consider the following 194-residue polypeptide: Oligoribonuclease (194 aa).

In terms of domain architecture, Exonuclease spans 11 to 174 (LIWIDLEMTG…SDVRDSINEL (164 aa)). Tyr-132 is an active-site residue.

Belongs to the oligoribonuclease family.

It is found in the cytoplasm. 3'-to-5' exoribonuclease specific for small oligoribonucleotides. This is Oligoribonuclease from Xanthomonas oryzae pv. oryzae (strain MAFF 311018).